Consider the following 310-residue polypeptide: Probable manganese-dependent inorganic pyrophosphatase (310 aa).

Mn(2+) is bound by residues histidine 10, aspartate 14, aspartate 16, aspartate 75, histidine 97, and aspartate 149.

It belongs to the PPase class C family. Mn(2+) serves as cofactor.

It is found in the cytoplasm. It catalyses the reaction diphosphate + H2O = 2 phosphate + H(+). This is Probable manganese-dependent inorganic pyrophosphatase from Clostridium acetobutylicum (strain ATCC 824 / DSM 792 / JCM 1419 / IAM 19013 / LMG 5710 / NBRC 13948 / NRRL B-527 / VKM B-1787 / 2291 / W).